The sequence spans 139 residues: Ribulose bisphosphate carboxylase small subunit (139 aa).

This sequence belongs to the RuBisCO small chain family. As to quaternary structure, heterohexadecamer of 8 large and 8 small subunits.

The protein localises to the plastid. It localises to the chloroplast. RuBisCO catalyzes two reactions: the carboxylation of D-ribulose 1,5-bisphosphate, the primary event in carbon dioxide fixation, as well as the oxidative fragmentation of the pentose substrate in the photorespiration process. Both reactions occur simultaneously and in competition at the same active site. Although the small subunit is not catalytic it is essential for maximal activity. The sequence is that of Ribulose bisphosphate carboxylase small subunit from Ectocarpus siliculosus (Brown alga).